The chain runs to 195 residues: ATP-dependent Clp protease proteolytic subunit (195 aa).

Serine 101 functions as the Nucleophile in the catalytic mechanism. Histidine 126 is an active-site residue.

This sequence belongs to the peptidase S14 family. Component of the chloroplastic Clp protease core complex.

Its subcellular location is the plastid. The protein localises to the chloroplast stroma. It carries out the reaction Hydrolysis of proteins to small peptides in the presence of ATP and magnesium. alpha-casein is the usual test substrate. In the absence of ATP, only oligopeptides shorter than five residues are hydrolyzed (such as succinyl-Leu-Tyr-|-NHMec, and Leu-Tyr-Leu-|-Tyr-Trp, in which cleavage of the -Tyr-|-Leu- and -Tyr-|-Trp bonds also occurs).. Cleaves peptides in various proteins in a process that requires ATP hydrolysis. Has a chymotrypsin-like activity. Plays a major role in the degradation of misfolded proteins. The sequence is that of ATP-dependent Clp protease proteolytic subunit from Oltmannsiellopsis viridis (Marine flagellate).